The following is a 201-amino-acid chain: Small ribosomal subunit protein uS4 (201 aa).

The S4 RNA-binding domain maps to 93–153 (QRLDNIVYRL…EKSKNLVIIK (61 aa)).

The protein belongs to the universal ribosomal protein uS4 family. As to quaternary structure, part of the 30S ribosomal subunit. Contacts protein S5. The interaction surface between S4 and S5 is involved in control of translational fidelity.

One of the primary rRNA binding proteins, it binds directly to 16S rRNA where it nucleates assembly of the body of the 30S subunit. Its function is as follows. With S5 and S12 plays an important role in translational accuracy. The chain is Small ribosomal subunit protein uS4 from Latilactobacillus sakei subsp. sakei (strain 23K) (Lactobacillus sakei subsp. sakei).